Reading from the N-terminus, the 211-residue chain is Thymidylate kinase (211 aa).

Residue 11–18 (GPDGAGKT) coordinates ATP.

This sequence belongs to the thymidylate kinase family.

It carries out the reaction dTMP + ATP = dTDP + ADP. Functionally, phosphorylation of dTMP to form dTDP in both de novo and salvage pathways of dTTP synthesis. The protein is Thymidylate kinase of Streptococcus pyogenes serotype M6 (strain ATCC BAA-946 / MGAS10394).